A 1047-amino-acid chain; its full sequence is FACT complex subunit SPT16 (1047 aa).

The residue at position 2 (Ala-2) is an N-acetylalanine. Lys-139 carries the N6-acetyllysine modification. A Phosphoserine modification is found at Ser-188. Lys-196 and Lys-223 each carry N6-acetyllysine. Residues 432–507 adopt a coiled-coil conformation; that stretch reads LKNEDEEEEE…GEQQIQKARK (76 aa). Position 455 is a phosphoserine (Ser-455). The interval 492–518 is disordered; sequence RLTEQKGEQQIQKARKSNVSYKNPSLM. A Glycyl lysine isopeptide (Lys-Gly) (interchain with G-Cter in SUMO2) cross-link involves residue Lys-497. Polar residues predominate over residues 499–514; that stretch reads EQQIQKARKSNVSYKN. Ser-508 is modified (phosphoserine). Lys-513 is subject to N6-acetyllysine; alternate. Lys-513 participates in a covalent cross-link: Glycyl lysine isopeptide (Lys-Gly) (interchain with G-Cter in SUMO2); alternate. Lys-647 is covalently cross-linked (Glycyl lysine isopeptide (Lys-Gly) (interchain with G-Cter in SUMO2)). Ser-650 and Ser-658 each carry phosphoserine. N6-acetyllysine is present on residues Lys-732 and Lys-786. Thr-903 bears the Phosphothreonine mark. Lys-904 bears the N6-acetyllysine mark. The segment at 918-1047 is disordered; that stretch reads EQGGWSFLEP…SSAPPKKKRK (130 aa). The span at 927-973 shows a compositional bias: acidic residues; sequence PEGEGSDAEEGDSESEIEDETFNPSEDDYEEEEEDSDEDYSSEAEES. Phosphoserine occurs at positions 979, 982, 986, and 1015. The segment covering 985-1005 has biased composition (basic and acidic residues); it reads ESGKDWDELEEEARKADRESR. Over residues 1024-1039 the composition is skewed to low complexity; the sequence is VHSSGRGSNRGSRHSS.

It belongs to the peptidase M24 family. SPT16 subfamily. In terms of assembly, interacts with MYOG (via C-terminal region). Component of the FACT complex, a stable heterodimer of SSRP1 and SUPT16H. Also a component of a CK2-SPT16-SSRP1 complex which forms following UV irradiation, composed of SSRP1, SUPT16H, CSNK2A1, CSNK2A2 and CSNK2B. Interacts with NEK9. Binds to histone H2A-H2B. Identified in a centromere complex containing histones H2A, H2B and H4, and at least CENPA, CENPB, CENPC, CENPT, CENPN, HJURP, SUPT16H, SSRP1 and RSF1. Interacts with GTF2E2. (Microbial infection) Interacts with Herpes simplex virus 1 (HHV-1) protein ICP22; this interaction relocalizes the FACT complex to viral genomes in infected cells. Post-translationally, ADP-ribosylated. ADP-ribosylation by PARP1 is induced by genotoxic stress and correlates with dissociation of FACT from chromatin. As to expression, ubiquitous.

It is found in the nucleus. Its subcellular location is the chromosome. Component of the FACT complex, a general chromatin factor that acts to reorganize nucleosomes. The FACT complex is involved in multiple processes that require DNA as a template such as mRNA elongation, DNA replication and DNA repair. During transcription elongation the FACT complex acts as a histone chaperone that both destabilizes and restores nucleosomal structure. It facilitates the passage of RNA polymerase II and transcription by promoting the dissociation of one histone H2A-H2B dimer from the nucleosome, then subsequently promotes the reestablishment of the nucleosome following the passage of RNA polymerase II. The FACT complex is probably also involved in phosphorylation of 'Ser-392' of p53/TP53 via its association with CK2 (casein kinase II). This is FACT complex subunit SPT16 (SUPT16H) from Homo sapiens (Human).